A 93-amino-acid chain; its full sequence is uncharacterized protein (93 aa).

A helical membrane pass occupies residues 12–32 (VVGGLSFWTFSAGLIMIVNAL). The tract at residues 47 to 66 (TANANGSDDDNENKNNSYRS) is disordered.

It localises to the cell membrane. This is an uncharacterized protein from Mycoplasma genitalium (strain ATCC 33530 / DSM 19775 / NCTC 10195 / G37) (Mycoplasmoides genitalium).